The chain runs to 168 residues: Crossover junction endodeoxyribonuclease RuvC (168 aa).

Residues D11, E71, and D144 contribute to the active site. 3 residues coordinate Mg(2+): D11, E71, and D144.

The protein belongs to the RuvC family. In terms of assembly, homodimer which binds Holliday junction (HJ) DNA. The HJ becomes 2-fold symmetrical on binding to RuvC with unstacked arms; it has a different conformation from HJ DNA in complex with RuvA. In the full resolvosome a probable DNA-RuvA(4)-RuvB(12)-RuvC(2) complex forms which resolves the HJ. Requires Mg(2+) as cofactor.

The protein localises to the cytoplasm. The catalysed reaction is Endonucleolytic cleavage at a junction such as a reciprocal single-stranded crossover between two homologous DNA duplexes (Holliday junction).. Functionally, the RuvA-RuvB-RuvC complex processes Holliday junction (HJ) DNA during genetic recombination and DNA repair. Endonuclease that resolves HJ intermediates. Cleaves cruciform DNA by making single-stranded nicks across the HJ at symmetrical positions within the homologous arms, yielding a 5'-phosphate and a 3'-hydroxyl group; requires a central core of homology in the junction. The consensus cleavage sequence is 5'-(A/T)TT(C/G)-3'. Cleavage occurs on the 3'-side of the TT dinucleotide at the point of strand exchange. HJ branch migration catalyzed by RuvA-RuvB allows RuvC to scan DNA until it finds its consensus sequence, where it cleaves and resolves the cruciform DNA. This is Crossover junction endodeoxyribonuclease RuvC from Protochlamydia amoebophila (strain UWE25).